Here is a 91-residue protein sequence, read N- to C-terminus: UPF0358 protein SAS1047 (91 aa).

This sequence belongs to the UPF0358 family.

This is UPF0358 protein SAS1047 from Staphylococcus aureus (strain MSSA476).